A 905-amino-acid chain; its full sequence is Cation-transporting ATPase pma1 (905 aa).

Helical transmembrane passes span 60–80 (FLLQFHQPLLYILLIAGTVKA), 81–101 (FLGSWTNAWVIWGVTLVNAII), 248–268 (FSHTLLYVIVTLAAFTFAVGW), and 283–303 (ALAVSAIPEGLPAVVTVTLAI). D333 serves as the catalytic 4-aspartylphosphate intermediate. A run of 5 helical transmembrane segments spans residues 716–736 (ILISVLLALNLPILSLQVLWL), 774–794 (LLHRILLVSLFNWILIFGMFE), 809–829 (MAIQALVAARVIYLLSISQLG), 848–868 (ILLLGIAVAIALQIGFSQLPF), and 880–900 (WQQWAICLLPMIPMVPVAILA).

This sequence belongs to the cation transport ATPase (P-type) (TC 3.A.3) family. Type IIA subfamily.

It is found in the cell membrane. The catalysed reaction is ATP + H2O = ADP + phosphate + H(+). Its function is as follows. Could mediate calcium influx. This is Cation-transporting ATPase pma1 (pma1) from Synechocystis sp. (strain ATCC 27184 / PCC 6803 / Kazusa).